Reading from the N-terminus, the 113-residue chain is Colipase (113 aa).

The N-terminal stretch at 1–18 is a signal peptide; the sequence is MEKVLVLLLVSLLAVAYA. The propeptide at 19 to 23 is enterostatin, activation peptide; it reads APGPR. 5 cysteine pairs are disulfide-bonded: C35–C46, C41–C57, C45–C79, C67–C87, and C81–C105.

The protein belongs to the colipase family. As to quaternary structure, forms a 1:1 stoichiometric complex with pancreatic lipase. Expressed by the pancreas.

The protein resides in the secreted. Colipase is a cofactor of pancreatic lipase. It allows the lipase to anchor itself to the lipid-water interface. Without colipase the enzyme is washed off by bile salts, which have an inhibitory effect on the lipase. Functionally, enterostatin has a biological activity as a satiety signal. This Mus musculus (Mouse) protein is Colipase.